The chain runs to 158 residues: NAD(P)H-quinone oxidoreductase subunit J, chloroplastic (158 aa).

This sequence belongs to the complex I 30 kDa subunit family. NDH is composed of at least 16 different subunits, 5 of which are encoded in the nucleus.

It localises to the plastid. It is found in the chloroplast thylakoid membrane. It catalyses the reaction a plastoquinone + NADH + (n+1) H(+)(in) = a plastoquinol + NAD(+) + n H(+)(out). The enzyme catalyses a plastoquinone + NADPH + (n+1) H(+)(in) = a plastoquinol + NADP(+) + n H(+)(out). Functionally, NDH shuttles electrons from NAD(P)H:plastoquinone, via FMN and iron-sulfur (Fe-S) centers, to quinones in the photosynthetic chain and possibly in a chloroplast respiratory chain. The immediate electron acceptor for the enzyme in this species is believed to be plastoquinone. Couples the redox reaction to proton translocation, and thus conserves the redox energy in a proton gradient. The protein is NAD(P)H-quinone oxidoreductase subunit J, chloroplastic of Chloranthus spicatus (Chulantree).